The sequence spans 285 residues: Mitochondrial substrate carrier family protein S (285 aa).

The Mitochondrial intermembrane segment spans residues 1–9 (MSTERGLKD). Solcar repeat units lie at residues 4–87 (ERGL…MKVL), 96–183 (LTVG…CKRY), and 197–283 (LNLP…VIKL). The chain crosses the membrane as a helical span at residues 10-30 (SIAGTVAGAACLFTGHPFDTI). Over 31-61 (RVRLQTSNTPIGIMECFRNTIKYEGFSGLYK) the chain is Mitochondrial matrix. Residues 62-82 (GVTSPLFGMMFETAVLFAGYG) form a helical membrane-spanning segment. The Mitochondrial intermembrane segment spans residues 83-101 (QMKVLLQKDENTPLTVGQC). Residues 102–122 (AIAGGFAGVGASVVLTPVELV) form a helical membrane-spanning segment. At 123–150 (KCRLQVQTTGPQKYKGSLDCLVQILKEG) the chain is on the mitochondrial matrix side. A helical transmembrane segment spans residues 151–172 (GIRGAYRGFTPTIAREFVGNMA). At 173 to 199 (FFSTYETCKRYFKNKENKPNDDDELNL) the chain is on the mitochondrial intermembrane side. The chain crosses the membrane as a helical span at residues 200–220 (PALIISGGLGGMAYWTVLYPV). Residues 221–258 (DVAKSKIQISEGAGPSPSIVKVLKEIYSKEGVKGLFRG) lie on the Mitochondrial matrix side of the membrane. The helical transmembrane segment at 259-277 (YTPTIIRSFPANAAMFSVY) threads the bilayer. At 278-285 (ELVIKLLG) the chain is on the mitochondrial intermembrane side.

The protein belongs to the mitochondrial carrier (TC 2.A.29) family.

The protein localises to the mitochondrion inner membrane. Its function is as follows. Mitochondrial solute carriers shuttle metabolites, nucleotides, and cofactors through the mitochondrial inner membrane. Mediates the transport of acylcarnitines of different length across the mitochondrial inner membrane from the cytosol to the mitochondrial matrix for their oxidation by the mitochondrial fatty acid-oxidation pathway. The sequence is that of Mitochondrial substrate carrier family protein S (mcfS) from Dictyostelium discoideum (Social amoeba).